The following is a 254-amino-acid chain: Dihydroorotate dehydrogenase B (NAD(+)), electron transfer subunit (254 aa).

The 99-residue stretch at 1 to 99 folds into the FAD-binding FR-type domain; it reads MLQTEMKVIQ…LGPLGKGFDI (99 aa). FAD is bound by residues 50–53, 67–69, and 74–75; these read RPIS, LYR, and GT. Positions 218, 223, 226, and 241 each coordinate [2Fe-2S] cluster.

This sequence belongs to the PyrK family. Heterotetramer of 2 PyrK and 2 PyrD type B subunits. [2Fe-2S] cluster is required as a cofactor. It depends on FAD as a cofactor.

It functions in the pathway pyrimidine metabolism; UMP biosynthesis via de novo pathway; orotate from (S)-dihydroorotate (NAD(+) route): step 1/1. In terms of biological role, responsible for channeling the electrons from the oxidation of dihydroorotate from the FMN redox center in the PyrD type B subunit to the ultimate electron acceptor NAD(+). This chain is Dihydroorotate dehydrogenase B (NAD(+)), electron transfer subunit, found in Listeria welshimeri serovar 6b (strain ATCC 35897 / DSM 20650 / CCUG 15529 / CIP 8149 / NCTC 11857 / SLCC 5334 / V8).